A 340-amino-acid polypeptide reads, in one-letter code: Glyceraldehyde-3-phosphate dehydrogenase (340 aa).

Residues 11–12 (TI) and Gly-109 each bind NAD(+). 138-140 (SCN) serves as a coordination point for D-glyceraldehyde 3-phosphate. Cys-139 acts as the Nucleophile in catalysis. Arg-167 is an NAD(+) binding site. 193 to 194 (HA) contributes to the D-glyceraldehyde 3-phosphate binding site. Gln-300 serves as a coordination point for NAD(+).

The protein belongs to the glyceraldehyde-3-phosphate dehydrogenase family. In terms of assembly, homotetramer.

It localises to the cytoplasm. It carries out the reaction D-glyceraldehyde 3-phosphate + phosphate + NADP(+) = (2R)-3-phospho-glyceroyl phosphate + NADPH + H(+). The enzyme catalyses D-glyceraldehyde 3-phosphate + phosphate + NAD(+) = (2R)-3-phospho-glyceroyl phosphate + NADH + H(+). The protein operates within carbohydrate degradation; glycolysis; pyruvate from D-glyceraldehyde 3-phosphate: step 1/5. The sequence is that of Glyceraldehyde-3-phosphate dehydrogenase from Saccharolobus islandicus (strain M.14.25 / Kamchatka #1) (Sulfolobus islandicus).